Reading from the N-terminus, the 440-residue chain is Protein arginine N-methyltransferase 2 (440 aa).

The interval 147–194 (LSSGSEDGDEEMEVQQDDDEEAPQLVSTEDVEPTVEEPKFIPPDAKEK) is disordered. Residues 152–168 (EDGDEEMEVQQDDDEEA) show a composition bias toward acidic residues. Residues 182-194 (EEPKFIPPDAKEK) are compositionally biased toward basic and acidic residues. Positions 192-440 (KEKQVTSEEY…RYAVGTSNRL (249 aa)) constitute an RMT2 domain. Residues Tyr201, Met230, 252–257 (FGMGIV), 273–275 (EAH), 310–311 (WQ), and Asp330 contribute to the S-adenosyl-L-methionine site.

This sequence belongs to the class I-like SAM-binding methyltransferase superfamily. RMT2 methyltransferase family. In terms of assembly, monomer.

It localises to the cytoplasm. It is found in the nucleus. Its function is as follows. S-adenosyl-L-methionine-dependent protein-arginine N-methyltransferase that methylates the delta-nitrogen atom of arginine residues to form N5-methylarginine (type IV) in target proteins. Monomethylates ribosomal protein L12. This Gibberella zeae (strain ATCC MYA-4620 / CBS 123657 / FGSC 9075 / NRRL 31084 / PH-1) (Wheat head blight fungus) protein is Protein arginine N-methyltransferase 2.